We begin with the raw amino-acid sequence, 368 residues long: Flagellar P-ring protein (368 aa).

A signal peptide spans Met-1–Ala-24.

This sequence belongs to the FlgI family. As to quaternary structure, the basal body constitutes a major portion of the flagellar organelle and consists of four rings (L,P,S, and M) mounted on a central rod.

It localises to the periplasm. The protein localises to the bacterial flagellum basal body. In terms of biological role, assembles around the rod to form the L-ring and probably protects the motor/basal body from shearing forces during rotation. This is Flagellar P-ring protein from Geotalea uraniireducens (strain Rf4) (Geobacter uraniireducens).